A 110-amino-acid chain; its full sequence is Cuticle protein 13 (110 aa).

This is Cuticle protein 13 from Limulus polyphemus (Atlantic horseshoe crab).